We begin with the raw amino-acid sequence, 193 residues long: MIGRIAGILLEKNPPHLLVDCNGVGYEIDVPMSTFYNLPQTGERVVLLTQQIVREDAHLLYGFLTPQERTTFRELLKITGIGARMALAVLSGMSVQELAQAVTMQDAARLTRLPGIGKKTAERLLLELKGKLGADLGALAGAASPSDHAADILNALVALGYSEKEGLAAIKNVPAGTGVSDGIKLALKALSKA.

The tract at residues 1–64 (MIGRIAGILL…EDAHLLYGFL (64 aa)) is domain I. The tract at residues 65–139 (TPQERTTFRE…GKLGADLGAL (75 aa)) is domain II. Positions 139-143 (LAGAA) are flexible linker. The interval 144–193 (SPSDHAADILNALVALGYSEKEGLAAIKNVPAGTGVSDGIKLALKALSKA) is domain III.

This sequence belongs to the RuvA family. In terms of assembly, homotetramer. Forms an RuvA(8)-RuvB(12)-Holliday junction (HJ) complex. HJ DNA is sandwiched between 2 RuvA tetramers; dsDNA enters through RuvA and exits via RuvB. An RuvB hexamer assembles on each DNA strand where it exits the tetramer. Each RuvB hexamer is contacted by two RuvA subunits (via domain III) on 2 adjacent RuvB subunits; this complex drives branch migration. In the full resolvosome a probable DNA-RuvA(4)-RuvB(12)-RuvC(2) complex forms which resolves the HJ.

It is found in the cytoplasm. The RuvA-RuvB-RuvC complex processes Holliday junction (HJ) DNA during genetic recombination and DNA repair, while the RuvA-RuvB complex plays an important role in the rescue of blocked DNA replication forks via replication fork reversal (RFR). RuvA specifically binds to HJ cruciform DNA, conferring on it an open structure. The RuvB hexamer acts as an ATP-dependent pump, pulling dsDNA into and through the RuvAB complex. HJ branch migration allows RuvC to scan DNA until it finds its consensus sequence, where it cleaves and resolves the cruciform DNA. The polypeptide is Holliday junction branch migration complex subunit RuvA (Burkholderia vietnamiensis (strain G4 / LMG 22486) (Burkholderia cepacia (strain R1808))).